A 430-amino-acid polypeptide reads, in one-letter code: Tol-Pal system protein TolB (430 aa).

The signal sequence occupies residues 1–21 (MKQALRVAFGFLILWASVLHA).

This sequence belongs to the TolB family. The Tol-Pal system is composed of five core proteins: the inner membrane proteins TolA, TolQ and TolR, the periplasmic protein TolB and the outer membrane protein Pal. They form a network linking the inner and outer membranes and the peptidoglycan layer.

The protein localises to the periplasm. Functionally, part of the Tol-Pal system, which plays a role in outer membrane invagination during cell division and is important for maintaining outer membrane integrity. TolB occupies a key intermediary position in the Tol-Pal system because it communicates directly with both membrane-embedded components, Pal in the outer membrane and TolA in the inner membrane. This Escherichia coli O8 (strain IAI1) protein is Tol-Pal system protein TolB.